A 344-amino-acid polypeptide reads, in one-letter code: Angiopoietin-related protein 7 (344 aa).

The signal sequence occupies residues Met-1–Pro-26. Residues Glu-37 to Gln-116 adopt a coiled-coil conformation. Residue Asn-56 is glycosylated (N-linked (GlcNAc...) asparagine). The region spanning Gln-120–Asp-341 is the Fibrinogen C-terminal domain. A disulfide bridge links Cys-129 with Cys-160. Asn-251 and Asn-265 each carry an N-linked (GlcNAc...) asparagine glycan. Cys-283 and Cys-296 are joined by a disulfide.

Homotetramer; disulfide-linked.

The protein localises to the secreted. Its function is as follows. Has a role in the formation and organization of the extracellular matrix. In the eye, it functions as a mediator of dexamethasone-induced matrix deposition in the trabecular meshwork, the tissue responsible for the outflow of the ocular aqueous humor and for the maintenance of intraocular pressure. Is a negative regulator of angiogenesis in the cornea, and plays a major role in maintaining corneal avascularity and transparency. This chain is Angiopoietin-related protein 7 (ANGPTL7), found in Bos taurus (Bovine).